The sequence spans 367 residues: GTPase Obg (367 aa).

The 158-residue stretch at 1-158 (MFIDNVELTV…VQIRLELKLI (158 aa)) folds into the Obg domain. Residues 159–358 (ADVGLVGFPN…LKYALYDLVK (200 aa)) form the OBG-type G domain. Residues 165–172 (GFPNVGKS), 190–194 (FTTLT), 212–215 (DIPG), 280–283 (TKID), and 339–341 (SAV) each bind GTP. Serine 172 and threonine 192 together coordinate Mg(2+).

It belongs to the TRAFAC class OBG-HflX-like GTPase superfamily. OBG GTPase family. In terms of assembly, monomer. The cofactor is Mg(2+).

It is found in the cytoplasm. Functionally, an essential GTPase which binds GTP, GDP and possibly (p)ppGpp with moderate affinity, with high nucleotide exchange rates and a fairly low GTP hydrolysis rate. Plays a role in control of the cell cycle, stress response, ribosome biogenesis and in those bacteria that undergo differentiation, in morphogenesis control. The protein is GTPase Obg of Nitratiruptor sp. (strain SB155-2).